A 555-amino-acid chain; its full sequence is Oxygen-dependent choline dehydrogenase (555 aa).

Residue 4 to 33 (DYIIIGAGSAGNVLATRLTEDADVSVLLLE) participates in FAD binding. Positions 180-202 (QQEGFGPMDRTVTPKGRRASTAR) are disordered. Histidine 473 functions as the Proton acceptor in the catalytic mechanism.

Belongs to the GMC oxidoreductase family. FAD serves as cofactor.

It catalyses the reaction choline + A = betaine aldehyde + AH2. It carries out the reaction betaine aldehyde + NAD(+) + H2O = glycine betaine + NADH + 2 H(+). Its pathway is amine and polyamine biosynthesis; betaine biosynthesis via choline pathway; betaine aldehyde from choline (cytochrome c reductase route): step 1/1. Its function is as follows. Involved in the biosynthesis of the osmoprotectant glycine betaine. Catalyzes the oxidation of choline to betaine aldehyde and betaine aldehyde to glycine betaine at the same rate. The protein is Oxygen-dependent choline dehydrogenase of Serratia proteamaculans (strain 568).